The primary structure comprises 347 residues: GDT1-like protein 2, chloroplastic (347 aa).

The N-terminal 12 residues, 1 to 12 (MATAISVGVAVP), are a transit peptide targeting the chloroplast. A disordered region spans residues 70–97 (EAGSHGEHLDSSATRDSNKPTKPPSGSR). The next 7 helical transmembrane spans lie at 99–119 (PQSI…IVFF), 124–144 (SAVV…LIFV), 165–185 (ALVL…SVII), 196–216 (FQTT…FFGF), 257–277 (LTSP…AEWG), 299–319 (GAIA…AFLA), and 327–347 (VGLI…FGVF).

It belongs to the GDT1 family.

It localises to the plastid. The protein localises to the chloroplast membrane. The sequence is that of GDT1-like protein 2, chloroplastic from Oryza sativa subsp. japonica (Rice).